The primary structure comprises 382 residues: Dual-specificity RNA methyltransferase RlmN (382 aa).

Glu113 serves as the catalytic Proton acceptor. The Radical SAM core domain maps to 119-358 (EINRATLCIS…TTIRKQRGID (240 aa)). A disulfide bond links Cys126 and Cys363. Residues Cys133, Cys137, and Cys140 each coordinate [4Fe-4S] cluster. S-adenosyl-L-methionine-binding positions include 187–188 (GE), Ser219, 241–243 (SLH), and Asn320. The S-methylcysteine intermediate role is filled by Cys363.

This sequence belongs to the radical SAM superfamily. RlmN family. The cofactor is [4Fe-4S] cluster.

It is found in the cytoplasm. The catalysed reaction is adenosine(2503) in 23S rRNA + 2 reduced [2Fe-2S]-[ferredoxin] + 2 S-adenosyl-L-methionine = 2-methyladenosine(2503) in 23S rRNA + 5'-deoxyadenosine + L-methionine + 2 oxidized [2Fe-2S]-[ferredoxin] + S-adenosyl-L-homocysteine. It catalyses the reaction adenosine(37) in tRNA + 2 reduced [2Fe-2S]-[ferredoxin] + 2 S-adenosyl-L-methionine = 2-methyladenosine(37) in tRNA + 5'-deoxyadenosine + L-methionine + 2 oxidized [2Fe-2S]-[ferredoxin] + S-adenosyl-L-homocysteine. Specifically methylates position 2 of adenine 2503 in 23S rRNA and position 2 of adenine 37 in tRNAs. m2A2503 modification seems to play a crucial role in the proofreading step occurring at the peptidyl transferase center and thus would serve to optimize ribosomal fidelity. This Wigglesworthia glossinidia brevipalpis protein is Dual-specificity RNA methyltransferase RlmN.